A 256-amino-acid polypeptide reads, in one-letter code: 5-keto-4-deoxy-D-glucarate aldolase (256 aa).

Histidine 50 functions as the Proton acceptor in the catalytic mechanism. Position 151 (glutamine 151) interacts with substrate. Glutamate 153 contributes to the Mg(2+) binding site. Positions 178 and 179 each coordinate substrate. Aspartate 179 serves as a coordination point for Mg(2+).

It belongs to the HpcH/HpaI aldolase family. KDGluc aldolase subfamily. As to quaternary structure, homohexamer; trimer of dimers. Requires Mg(2+) as cofactor.

It carries out the reaction 5-dehydro-4-deoxy-D-glucarate = 2-hydroxy-3-oxopropanoate + pyruvate. It catalyses the reaction 2-dehydro-3-deoxy-D-glucarate = 2-hydroxy-3-oxopropanoate + pyruvate. It functions in the pathway carbohydrate acid metabolism; galactarate degradation; D-glycerate from galactarate: step 2/3. Catalyzes the reversible retro-aldol cleavage of both 5-keto-4-deoxy-D-glucarate and 2-keto-3-deoxy-D-glucarate to pyruvate and tartronic semialdehyde. This chain is 5-keto-4-deoxy-D-glucarate aldolase, found in Shigella boydii serotype 4 (strain Sb227).